Consider the following 200-residue polypeptide: MIELFDVDYNLLPDNRSKELFSLRKKTFKDRLDWLVNCENNMEFDEYDNRHATYIFGTYQNHVICSLRFIETKYPNMISDGVFDTYFNDIKLPDGNYVEASRLFIDKARIQALQLHQAPISAMLFLSMINYARNCGYEGIYAIISHPMRIIFQRSGWHISVVKTGCSEKNKNIYLIYMPIDDANRNRLLARINQHATKMG.

This sequence belongs to the autoinducer synthase family.

The catalysed reaction is a fatty acyl-[ACP] + S-adenosyl-L-methionine = an N-acyl-L-homoserine lactone + S-methyl-5'-thioadenosine + holo-[ACP] + H(+). Functionally, required for the synthesis of BHL (N-butanoyl-L-homoserine lactone). In Serratia liquefaciens, this protein is Acyl-homoserine-lactone synthase (swrI).